Reading from the N-terminus, the 1432-residue chain is ABC transporter asL7 (1432 aa).

The segment covering 1–20 has biased composition (polar residues); that stretch reads MFDTTKLQSSTQDGSTSSVT. The tract at residues 1-36 is disordered; it reads MFDTTKLQSSTQDGSTSSVTGEPIFGANDPNSELNP. Residues 91-341 form the ABC transporter 1 domain; the sequence is LALPGMLIRN…FERLGFECPS (251 aa). Asn-265 carries N-linked (GlcNAc...) asparagine glycosylation. The next 6 helical transmembrane spans lie at 450-470, 484-504, 530-550, 559-579, 597-617, and 702-722; these read PTIV…SLFF, VVLF…VMTL, VLMD…VFYF, GNFF…SGIF, MIPA…MVPI, and IGIV…TSEY. Positions 786–1029 constitute an ABC transporter 2 domain; it reads FHWRNVCYDI…TLVEYFERKA (244 aa). 822–829 is a binding site for ATP; it reads GVSGAGKT. Asn-1017 carries N-linked (GlcNAc...) asparagine glycosylation. Residues 1076 to 1095 are disordered; that stretch reads LSRLREHGSQSNSHDSEKSE. The next 6 helical transmembrane spans lie at 1135–1155, 1166–1186, 1215–1235, 1251–1271, 1279–1299, and 1317–1337; these read FALC…SPLS, VFQL…QFII, IPYY…PIGL, LMWL…HFCI, AGAN…GALI, and LSYL…VTCA. N-linked (GlcNAc...) asparagine glycosylation occurs at Asn-1371. Residues 1402-1422 traverse the membrane as a helical segment; it reads FGIIWVYVIFNISAAITLYWV.

Belongs to the ABC transporter superfamily. ABCG family. PDR (TC 3.A.1.205) subfamily.

It is found in the cell membrane. ABC transporter; part of the gene cluster that mediates the biosynthesis of xenovulene A, an unusual meroterpenoid that has potent inhibitory effects on the human gamma-aminobutyrate A (GABAA) benzodiazepine receptor. In Sarocladium schorii (Acremonium strictum (strain IMI 501407)), this protein is ABC transporter asL7.